The following is a 248-amino-acid chain: Probable transcriptional regulatory protein Acel_1346 (248 aa).

This sequence belongs to the TACO1 family.

Its subcellular location is the cytoplasm. The sequence is that of Probable transcriptional regulatory protein Acel_1346 from Acidothermus cellulolyticus (strain ATCC 43068 / DSM 8971 / 11B).